A 402-amino-acid polypeptide reads, in one-letter code: 3-isopropylmalate dehydratase large subunit 2 (402 aa).

[4Fe-4S] cluster-binding residues include Cys280, Cys341, and Cys344.

The protein belongs to the aconitase/IPM isomerase family. LeuC type 2 subfamily. Heterodimer of LeuC and LeuD. It depends on [4Fe-4S] cluster as a cofactor.

The catalysed reaction is (2R,3S)-3-isopropylmalate = (2S)-2-isopropylmalate. The protein operates within amino-acid biosynthesis; L-leucine biosynthesis; L-leucine from 3-methyl-2-oxobutanoate: step 2/4. Functionally, catalyzes the isomerization between 2-isopropylmalate and 3-isopropylmalate, via the formation of 2-isopropylmaleate. The protein is 3-isopropylmalate dehydratase large subunit 2 of Methanopyrus kandleri (strain AV19 / DSM 6324 / JCM 9639 / NBRC 100938).